The following is a 678-amino-acid chain: Protein hook (678 aa).

An interaction with microtubules region spans residues 1-155 (MSTQNGMYYS…NIMRALQELE (155 aa)). The region spanning 5–123 (NGMYYSLLEW…RLLQLVLGCA (119 aa)) is the Calponin-homology (CH) domain. Coiled-coil stretches lie at residues 135–435 (EIMC…LKCG) and 479–589 (QTAL…AKEV).

Belongs to the hook family. In terms of assembly, homodimer. Interacts with microtubules via its N-terminus.

The protein localises to the cytoplasm. The protein resides in the cytoskeleton. Its subcellular location is the endosome. It is found in the synapse. Involved in endocytic trafficking by stabilizing organelles of the endocytic pathway. Probably acts as a cytoskeletal linker protein required to tether endosome vesicles to the cytoskeleton. Involved in modulation of endocytosis at stages required for down-regulation of membrane proteins that control synapse size. Not involved in synaptic vesicle recycling. Required in R7 cells for boss endocytosis into multivesicular bodies (MVBs). Has a role in regulating adult longevity. The sequence is that of Protein hook from Drosophila virilis (Fruit fly).